A 218-amino-acid chain; its full sequence is rRNA methyltransferase 2, mitochondrial (218 aa).

Residues 59-62 (PGSW), D80, 96-97 (DI), and D133 each bind S-adenosyl-L-methionine. The active-site Proton acceptor is K173.

Belongs to the class I-like SAM-binding methyltransferase superfamily. RNA methyltransferase RlmE family.

The protein resides in the mitochondrion. It carries out the reaction a uridine in 21S rRNA + S-adenosyl-L-methionine = a 2'-O-methyluridine in 21S rRNA + S-adenosyl-L-homocysteine + H(+). S-adenosyl-L-methionine-dependent 2'-O-ribose methyltransferase that catalyzes the formation of the 2'-O-methyluridine corresponding to position 2791 in S.cerevisiae 21S mitochondrial large subunit ribosomal RNA (mtLSU rRNA), a universally conserved modification in the peptidyl transferase domain of the mtLSU rRNA. This Schizosaccharomyces pombe (strain 972 / ATCC 24843) (Fission yeast) protein is rRNA methyltransferase 2, mitochondrial.